A 433-amino-acid polypeptide reads, in one-letter code: Enolase (433 aa).

Glutamine 167 contacts (2R)-2-phosphoglycerate. Glutamate 209 acts as the Proton donor in catalysis. Mg(2+) is bound by residues aspartate 246, glutamate 291, and aspartate 318. Residues lysine 343, arginine 372, serine 373, and lysine 394 each coordinate (2R)-2-phosphoglycerate. Lysine 343 serves as the catalytic Proton acceptor.

The protein belongs to the enolase family. As to quaternary structure, component of the RNA degradosome, a multiprotein complex involved in RNA processing and mRNA degradation. Requires Mg(2+) as cofactor.

The protein localises to the cytoplasm. It is found in the secreted. Its subcellular location is the cell surface. It catalyses the reaction (2R)-2-phosphoglycerate = phosphoenolpyruvate + H2O. It functions in the pathway carbohydrate degradation; glycolysis; pyruvate from D-glyceraldehyde 3-phosphate: step 4/5. Its function is as follows. Catalyzes the reversible conversion of 2-phosphoglycerate (2-PG) into phosphoenolpyruvate (PEP). It is essential for the degradation of carbohydrates via glycolysis. In Marinomonas sp. (strain MWYL1), this protein is Enolase.